The following is a 229-amino-acid chain: Large ribosomal subunit protein uL1 (229 aa).

It belongs to the universal ribosomal protein uL1 family. In terms of assembly, part of the 50S ribosomal subunit.

In terms of biological role, binds directly to 23S rRNA. The L1 stalk is quite mobile in the ribosome, and is involved in E site tRNA release. Functionally, protein L1 is also a translational repressor protein, it controls the translation of the L11 operon by binding to its mRNA. This chain is Large ribosomal subunit protein uL1, found in Streptococcus pneumoniae serotype 2 (strain D39 / NCTC 7466).